The chain runs to 110 residues: Small ribosomal subunit protein bS6 (110 aa).

It belongs to the bacterial ribosomal protein bS6 family.

Functionally, binds together with bS18 to 16S ribosomal RNA. The protein is Small ribosomal subunit protein bS6 (rpsF) of Aquifex aeolicus (strain VF5).